A 325-amino-acid polypeptide reads, in one-letter code: Protease HtpX homolog 2 (325 aa).

A run of 2 helical transmembrane segments spans residues 10–30 and 41–61; these read LNMALATLGITLLGFALALAV and VGLILSILIFIFFLNIIQWLF. His-147 is a Zn(2+) binding site. Glu-148 is an active-site residue. His-151 lines the Zn(2+) pocket. 2 consecutive transmembrane segments (helical) span residues 159 to 179 and 196 to 216; these read LLMAVGLIPALIYYLGWWLFW and LVFLLGIIMMAVSFVFQLLVL. Glu-223 serves as a coordination point for Zn(2+).

The protein belongs to the peptidase M48B family. Requires Zn(2+) as cofactor.

The protein localises to the cell membrane. The chain is Protease HtpX homolog 2 from Saccharolobus solfataricus (strain ATCC 35092 / DSM 1617 / JCM 11322 / P2) (Sulfolobus solfataricus).